The following is a 167-amino-acid chain: CASP-like protein UU1 (167 aa).

The Cytoplasmic segment spans residues 1-17 (MVELESQEAVTVASTAD). Residues 18–38 (IAVDVSLRLLAAATSLASAVV) traverse the membrane as a helical segment. At 39-54 (VAANHQQRWGVRVDFT) the chain is on the extracellular side. A helical transmembrane segment spans residues 55–75 (LFQVWIGFVAVNLVCTVYAAA). Topologically, residues 76 to 94 (TAAAARKAMGRWWLHHADA) are cytoplasmic. The chain crosses the membrane as a helical span at residues 95–115 (VVVNLEAAATAGAGAIGSIAM). Residues 116–135 (WGNEASGWYAVCRLYRRYCN) are Extracellular-facing. The helical transmembrane segment at 136–156 (AGAAALALSLAAVLLLGVACA) threads the bilayer. Residues 157-167 (RSRYPKMPPTT) are Cytoplasmic-facing.

This sequence belongs to the Casparian strip membrane proteins (CASP) family. Homodimer and heterodimers.

The protein localises to the cell membrane. The chain is CASP-like protein UU1 from Oryza sativa subsp. indica (Rice).